The chain runs to 712 residues: Phosphatase and actin regulator 4 (712 aa).

Disordered regions lie at residues 1 to 22 (MGQA…GQPT) and 90 to 405 (RGLL…EVPK). An RPEL 1 repeat occupies 72 to 97 (EVLERKISMRKPREELVKRGLLLEDS). Polar residues predominate over residues 114-124 (NGHTTLIGSTR). 4 positions are modified to phosphoserine: serine 125, serine 127, serine 140, and serine 156. Over residues 136–152 (ERIASLRKPVPEEEPKK) the composition is skewed to basic and acidic residues. Residues 198-230 (ATSSGSLARPSSSASTTAITTAPAATMAATNPA) are compositionally biased toward low complexity. Residues 233–243 (VHSSGPPSQAP) are compositionally biased toward polar residues. The segment covering 245–267 (TLPAAPASTHTTATLSLTHTGPA) has biased composition (low complexity). Phosphoserine occurs at positions 282, 303, and 353. Over residues 345–357 (SEPLLTPSSSPLP) the composition is skewed to low complexity. Residues 358-371 (AHIPPEPPQSPPFP) show a composition bias toward pro residues. At serine 436 the chain carries Phosphoserine. Threonine 441 is modified (phosphothreonine). A phosphoserine mark is found at serine 452, serine 462, serine 473, serine 524, serine 526, serine 567, and serine 600. A disordered region spans residues 507–557 (VIPKLPQCLQEEEEGKESDSDSEGPIQYRDEEDEDESHHSALANKVKRKDT). The span at 516–528 (QEEEEGKESDSDS) shows a compositional bias: acidic residues. 2 RPEL repeats span residues 593–618 (NTLI…QPKN) and 631–656 (RRLT…RFNE). The interval 602 to 626 (RPTPEELEQRNILQPKNEADRQAEK) is disordered. Serine 638 bears the Phosphoserine mark.

This sequence belongs to the phosphatase and actin regulator family. As to quaternary structure, binds PPP1CA and actin.

Its subcellular location is the cytoplasm. The protein localises to the cell projection. The protein resides in the lamellipodium. In terms of biological role, regulator of protein phosphatase 1 (PP1) required for neural tube and optic fissure closure, and enteric neural crest cell (ENCCs) migration during development. Acts as an activator of PP1 by interacting with PPP1CA and preventing phosphorylation of PPP1CA at 'Thr-320'. During neural tube closure, localizes to the ventral neural tube and activates PP1, leading to down-regulate cell proliferation within cranial neural tissue and the neural retina. Also acts as a regulator of migration of enteric neural crest cells (ENCCs) by activating PP1, leading to dephosphorylation and subsequent activation of cofilin (COF1 or COF2) and repression of the integrin signaling through the RHO/ROCK pathway. The chain is Phosphatase and actin regulator 4 (PHACTR4) from Bos taurus (Bovine).